The primary structure comprises 217 residues: 3,4-dihydroxy-2-butanone 4-phosphate synthase (217 aa).

D-ribulose 5-phosphate-binding positions include 37-38 (RE), D42, 150-154 (RRGHT), and E174. Residue E38 coordinates Mg(2+). H153 provides a ligand contact to Mg(2+).

This sequence belongs to the DHBP synthase family. Homodimer. It depends on Mg(2+) as a cofactor. Mn(2+) serves as cofactor.

The catalysed reaction is D-ribulose 5-phosphate = (2S)-2-hydroxy-3-oxobutyl phosphate + formate + H(+). It functions in the pathway cofactor biosynthesis; riboflavin biosynthesis; 2-hydroxy-3-oxobutyl phosphate from D-ribulose 5-phosphate: step 1/1. Its function is as follows. Catalyzes the conversion of D-ribulose 5-phosphate to formate and 3,4-dihydroxy-2-butanone 4-phosphate. This is 3,4-dihydroxy-2-butanone 4-phosphate synthase from Shewanella sediminis (strain HAW-EB3).